The chain runs to 370 residues: S-adenosylmethionine decarboxylase proenzyme (370 aa).

F28 serves as a coordination point for substrate. Residues E29 and E32 contribute to the active site. E85 lines the substrate pocket. Catalysis depends on S86, which acts as the Schiff-base intermediate with substrate; via pyruvic acid. S86 carries the pyruvic acid (Ser); by autocatalysis modification. The Proton donor; for catalytic activity role is filled by C100. Active-site proton acceptor; for processing activity residues include S249 and H262. E266 serves as a coordination point for substrate.

This sequence belongs to the eukaryotic AdoMetDC family. In terms of assembly, forms a heterodimer with catalytically inactive AdoMetDC prozyme; heterodimerization is required to activate AdoMetDC. Pyruvate is required as a cofactor. In terms of processing, is synthesized initially as an inactive proenzyme. Formation of the active enzyme involves a self-maturation process in which the active site pyruvoyl group is generated from an internal serine residue via an autocatalytic post-translational modification. Two non-identical subunits are generated from the proenzyme in this reaction, and the pyruvate is formed at the N-terminus of the alpha chain, which is derived from the carboxyl end of the proenzyme. The post-translation cleavage follows an unusual pathway, termed non-hydrolytic serinolysis, in which the side chain hydroxyl group of the serine supplies its oxygen atom to form the C-terminus of the beta chain, while the remainder of the serine residue undergoes an oxidative deamination to produce ammonia and the pyruvoyl group blocking the N-terminus of the alpha chain.

The enzyme catalyses S-adenosyl-L-methionine + H(+) = S-adenosyl 3-(methylsulfanyl)propylamine + CO2. Its pathway is amine and polyamine biosynthesis; S-adenosylmethioninamine biosynthesis; S-adenosylmethioninamine from S-adenosyl-L-methionine: step 1/1. With respect to regulation, allosterically activated by AdoMetDC prozyme. Activated by putrescine and to a lesser extent by spermidine, norspermidine and spermine. Inhibited by 5'-([(Z)-4-amino-2-butenyl]methylamino)-5'-deoxyadenosine (MDL 73811). In terms of biological role, in association with the catalytically inactive AdoMetDC prozyme, catalyzes the decarboxylation of S-adenosyl-L-methionine which is essential for the biosynthesis of the polyamine spermidine. Required for growth and survival during the bloodstream life cycle stage. The protein is S-adenosylmethionine decarboxylase proenzyme of Trypanosoma brucei brucei.